The chain runs to 272 residues: Putative pyruvate, phosphate dikinase regulatory protein 2 (272 aa).

Residue 154–161 (GVSRTSKT) participates in ADP binding.

Belongs to the pyruvate, phosphate/water dikinase regulatory protein family. PDRP subfamily.

It carries out the reaction N(tele)-phospho-L-histidyl/L-threonyl-[pyruvate, phosphate dikinase] + ADP = N(tele)-phospho-L-histidyl/O-phospho-L-threonyl-[pyruvate, phosphate dikinase] + AMP + H(+). The catalysed reaction is N(tele)-phospho-L-histidyl/O-phospho-L-threonyl-[pyruvate, phosphate dikinase] + phosphate + H(+) = N(tele)-phospho-L-histidyl/L-threonyl-[pyruvate, phosphate dikinase] + diphosphate. Its function is as follows. Bifunctional serine/threonine kinase and phosphorylase involved in the regulation of the pyruvate, phosphate dikinase (PPDK) by catalyzing its phosphorylation/dephosphorylation. This chain is Putative pyruvate, phosphate dikinase regulatory protein 2, found in Staphylococcus epidermidis (strain ATCC 35984 / DSM 28319 / BCRC 17069 / CCUG 31568 / BM 3577 / RP62A).